The chain runs to 231 residues: 5'-methylthioadenosine/S-adenosylhomocysteine nucleosidase (231 aa).

Glu-12 serves as the catalytic Proton acceptor. Substrate is bound by residues Gly-78, Val-153, and 174-175; that span reads ME. Asp-198 serves as the catalytic Proton donor.

It belongs to the PNP/UDP phosphorylase family. MtnN subfamily.

The catalysed reaction is S-adenosyl-L-homocysteine + H2O = S-(5-deoxy-D-ribos-5-yl)-L-homocysteine + adenine. It catalyses the reaction S-methyl-5'-thioadenosine + H2O = 5-(methylsulfanyl)-D-ribose + adenine. It carries out the reaction 5'-deoxyadenosine + H2O = 5-deoxy-D-ribose + adenine. It participates in amino-acid biosynthesis; L-methionine biosynthesis via salvage pathway; S-methyl-5-thio-alpha-D-ribose 1-phosphate from S-methyl-5'-thioadenosine (hydrolase route): step 1/2. In terms of biological role, catalyzes the irreversible cleavage of the glycosidic bond in both 5'-methylthioadenosine (MTA) and S-adenosylhomocysteine (SAH/AdoHcy) to adenine and the corresponding thioribose, 5'-methylthioribose and S-ribosylhomocysteine, respectively. Also cleaves 5'-deoxyadenosine, a toxic by-product of radical S-adenosylmethionine (SAM) enzymes, into 5-deoxyribose and adenine. The chain is 5'-methylthioadenosine/S-adenosylhomocysteine nucleosidase from Vibrio atlanticus (strain LGP32) (Vibrio splendidus (strain Mel32)).